Consider the following 209-residue polypeptide: Large ribosomal subunit protein bL25 (209 aa).

Positions 190–209 (GLKSADDEAEGEDAEEAAAE) are disordered. A compositionally biased stretch (acidic residues) spans 196 to 209 (DEAEGEDAEEAAAE).

This sequence belongs to the bacterial ribosomal protein bL25 family. CTC subfamily. As to quaternary structure, part of the 50S ribosomal subunit; part of the 5S rRNA/L5/L18/L25 subcomplex. Contacts the 5S rRNA. Binds to the 5S rRNA independently of L5 and L18.

This is one of the proteins that binds to the 5S RNA in the ribosome where it forms part of the central protuberance. This chain is Large ribosomal subunit protein bL25, found in Ruegeria sp. (strain TM1040) (Silicibacter sp.).